We begin with the raw amino-acid sequence, 159 residues long: 3-hydroxyacyl-[acyl-carrier-protein] dehydratase FabZ (159 aa).

H58 is an active-site residue.

It belongs to the thioester dehydratase family. FabZ subfamily.

It localises to the cytoplasm. The catalysed reaction is a (3R)-hydroxyacyl-[ACP] = a (2E)-enoyl-[ACP] + H2O. Its function is as follows. Involved in unsaturated fatty acids biosynthesis. Catalyzes the dehydration of short chain beta-hydroxyacyl-ACPs and long chain saturated and unsaturated beta-hydroxyacyl-ACPs. The chain is 3-hydroxyacyl-[acyl-carrier-protein] dehydratase FabZ from Helicobacter pylori (strain Shi470).